We begin with the raw amino-acid sequence, 277 residues long: Anamorsin homolog (277 aa).

Residues 1–160 are N-terminal SAM-like domain; sequence MDTKRMLQNS…NIGSSFALKK (160 aa). Positions 161 to 188 are linker; it reads SIKSPVKVQNDDYSDLIDEDSLLTEEDL. Residues Cys-199, Cys-208, Cys-211, and Cys-213 each coordinate [2Fe-2S] cluster. The tract at residues 199–213 is fe-S binding site A; that stretch reads CEVGSTRKACKNCTC. Positions 238, 241, 249, and 252 each coordinate [4Fe-4S] cluster. Short sequence motifs (cx2C motif) lie at residues 238-241 and 249-252; these read CGSC and CGTC. The segment at 238–252 is fe-S binding site B; the sequence is CGSCGLGDAFRCGTC.

It belongs to the anamorsin family. As to quaternary structure, monomer. [2Fe-2S] cluster serves as cofactor. It depends on [4Fe-4S] cluster as a cofactor.

It localises to the cytoplasm. Its subcellular location is the mitochondrion intermembrane space. Functionally, component of the cytosolic iron-sulfur (Fe-S) protein assembly (CIA) machinery. Required for the maturation of extramitochondrial Fe-S proteins. Part of an electron transfer chain functioning in an early step of cytosolic Fe-S biogenesis, facilitating the de novo assembly of a [4Fe-4S] cluster on the cytosolic Fe-S scaffold complex. Electrons are transferred from NADPH via a FAD- and FMN-containing diflavin oxidoreductase. Together with the diflavin oxidoreductase, also required for the assembly of the diferric tyrosyl radical cofactor of ribonucleotide reductase (RNR), probably by providing electrons for reduction during radical cofactor maturation in the catalytic small subunit. The protein is Anamorsin homolog of Populus trichocarpa (Western balsam poplar).